Reading from the N-terminus, the 255-residue chain is Diphthine synthase (255 aa).

Residues L9, D85, V88, 113 to 114 (SI), L164, A207, and H232 contribute to the S-adenosyl-L-methionine site.

This sequence belongs to the diphthine synthase family. In terms of assembly, homodimer.

It carries out the reaction 2-[(3S)-amino-3-carboxypropyl]-L-histidyl-[translation elongation factor 2] + 3 S-adenosyl-L-methionine = diphthine-[translation elongation factor 2] + 3 S-adenosyl-L-homocysteine + 3 H(+). Its pathway is protein modification; peptidyl-diphthamide biosynthesis. Its function is as follows. S-adenosyl-L-methionine-dependent methyltransferase that catalyzes the trimethylation of the amino group of the modified target histidine residue in translation elongation factor 2 (EF-2), to form an intermediate called diphthine. The three successive methylation reactions represent the second step of diphthamide biosynthesis. This is Diphthine synthase from Methanococcus maripaludis (strain C7 / ATCC BAA-1331).